A 518-amino-acid polypeptide reads, in one-letter code: Serine/threonine-protein kinase UL13 (518 aa).

Positions 1-119 (MDESRRQRPA…QAALTAPPSS (119 aa)) are disordered. One can recognise a Protein kinase domain in the interval 151-518 (PGARSFGGSG…TNPCARHALS (368 aa)). Residues 157–165 (GGSGGYGDV) and lysine 176 contribute to the ATP site. The active-site Proton acceptor is the aspartate 277.

It belongs to the protein kinase superfamily. Ser/Thr protein kinase family. Autophosphorylated.

The protein localises to the virion tegument. The protein resides in the host nucleus. It carries out the reaction L-seryl-[protein] + ATP = O-phospho-L-seryl-[protein] + ADP + H(+). The enzyme catalyses L-threonyl-[protein] + ATP = O-phospho-L-threonyl-[protein] + ADP + H(+). Multifunctional serine/threonine kinase that plays a role in several processes including egress of virus particles from the nucleus, modulation of the actin cytoskeleton and regulation of viral and cellular gene expression. Regulates the nuclear localization of viral envelopment factors UL34 and UL31, by phosphorylating the US3 kinase, indicating a role in nuclear egress. Disrupts host nuclear lamins, including LMNA and LMNB1. Phosphorylates the viral Fc receptor composed of glycoproteins E (gE) and I (gI). Phosphorylation of glycoprotein E (gE) by UL13 alters its subcellular localization, from the host early endosome to the plasma membrane. Participates in the transcriptional regulation of cellular and viral mRNAs mainly by phosphorylating the viral transcriptional regulator ICP22. Additional substrates have been identified, including UL41, UL49 or host EF1D. The chain is Serine/threonine-protein kinase UL13 from Homo sapiens (Human).